We begin with the raw amino-acid sequence, 745 residues long: Cytoplasmic polyadenylation element-binding protein 3 (745 aa).

3 disordered regions span residues 1 to 45, 94 to 180, and 204 to 283; these read MNLN…KSPT, VGSK…TNNS, and NKAN…FGEL. Residues 162 to 175 are compositionally biased toward basic and acidic residues; it reads LNFERDAEQKKDST. The segment covering 219-229 has biased composition (polar residues); sequence ETPTDSPQKGF. Positions 230-240 are enriched in low complexity; it reads SSSTESSPSDS. A compositionally biased stretch (polar residues) spans 241–255; sequence MNQFPSREHFTSANE. Residues 264–276 show a composition bias toward basic and acidic residues; the sequence is FQQEHGNKNRDSD. Positions 297 to 319 constitute an RRM domain; the sequence is IFVGGVPWDITEAALKDSFGEFG.

Its function is as follows. Cytoplasmic polyadenylation element binding protein that binds to and regulates the translation of specific mRNAs. May not be required for oogenesis. The protein is Cytoplasmic polyadenylation element-binding protein 3 (cpb-3) of Caenorhabditis elegans.